The following is a 296-amino-acid chain: Probable AP endonuclease (296 aa).

An intrachain disulfide couples cysteine 16 to cysteine 20. Zn(2+) is bound by residues histidine 78, histidine 115, glutamate 142, histidine 182, histidine 218, aspartate 231, histidine 233, and glutamate 271.

The protein belongs to the AP endonuclease 2 family. Requires Zn(2+) as cofactor.

The protein resides in the host nucleus. It is found in the host cytoplasm. It localises to the virion. Endonuclease that plays a role in DNA repair. Cleaves phosphodiester bonds on the 5' side of apurinic or apyrimidinic sites (AP sites). In addition to endonuclease activity, the ASFV enzyme has a proofreading 3'-5' exonuclease activity that is considerably more efficient in the elimination of a mismatch than in that of a correctly paired base. Displays 3'-phosphatase and 3'-repair diesterase activities. The single nucleotide gaps generated by the AP endonuclease are filled by the viral AP endonuclease and DNA ligase. The polypeptide is Probable AP endonuclease (Ornithodoros (relapsing fever ticks)).